The following is a 102-amino-acid chain: NADH-quinone oxidoreductase subunit K (102 aa).

Transmembrane regions (helical) follow at residues 5 to 25, 31 to 51, and 66 to 86; these read IMHY…GIFL, IIIL…FVAF, and FILT…VVFF.

This sequence belongs to the complex I subunit 4L family. NDH-1 is composed of 14 different subunits. Subunits NuoA, H, J, K, L, M, N constitute the membrane sector of the complex.

Its subcellular location is the cell inner membrane. It catalyses the reaction a quinone + NADH + 5 H(+)(in) = a quinol + NAD(+) + 4 H(+)(out). Functionally, NDH-1 shuttles electrons from NADH, via FMN and iron-sulfur (Fe-S) centers, to quinones in the respiratory chain. The immediate electron acceptor for the enzyme in this species is believed to be ubiquinone. Couples the redox reaction to proton translocation (for every two electrons transferred, four hydrogen ions are translocated across the cytoplasmic membrane), and thus conserves the redox energy in a proton gradient. The protein is NADH-quinone oxidoreductase subunit K of Bartonella henselae (strain ATCC 49882 / DSM 28221 / CCUG 30454 / Houston 1) (Rochalimaea henselae).